The chain runs to 143 residues: Small ribosomal subunit protein uS12 (143 aa).

The protein belongs to the universal ribosomal protein uS12 family. As to quaternary structure, component of the 40S small ribosomal subunit.

It is found in the cytoplasm. The protein localises to the cytosol. It localises to the rough endoplasmic reticulum. This Gillichthys mirabilis (Long-jawed mudsucker) protein is Small ribosomal subunit protein uS12 (rps23).